The following is a 634-amino-acid chain: Probable threonine--tRNA ligase, cytoplasmic (634 aa).

Residues 1 to 61 form the TGS domain; the sequence is MSIYVTFKGQ…NENQKIELYD (61 aa).

This sequence belongs to the class-II aminoacyl-tRNA synthetase family.

It localises to the cytoplasm. It catalyses the reaction tRNA(Thr) + L-threonine + ATP = L-threonyl-tRNA(Thr) + AMP + diphosphate + H(+). The chain is Probable threonine--tRNA ligase, cytoplasmic from Enterocytozoon bieneusi (strain H348) (Microsporidian parasite).